The chain runs to 468 residues: 3-isopropylmalate dehydratase large subunit (468 aa).

The [4Fe-4S] cluster site is built by Cys-347, Cys-407, and Cys-410.

This sequence belongs to the aconitase/IPM isomerase family. LeuC type 1 subfamily. Heterodimer of LeuC and LeuD. Requires [4Fe-4S] cluster as cofactor.

The catalysed reaction is (2R,3S)-3-isopropylmalate = (2S)-2-isopropylmalate. It functions in the pathway amino-acid biosynthesis; L-leucine biosynthesis; L-leucine from 3-methyl-2-oxobutanoate: step 2/4. Its function is as follows. Catalyzes the isomerization between 2-isopropylmalate and 3-isopropylmalate, via the formation of 2-isopropylmaleate. This Prochlorococcus marinus (strain SARG / CCMP1375 / SS120) protein is 3-isopropylmalate dehydratase large subunit.